Reading from the N-terminus, the 167-residue chain is Glutathione peroxidase-like peroxiredoxin 1 (167 aa).

C36 (cysteine sulfenic acid (-SOH) intermediate) is an active-site residue. Cysteines 36 and 82 form a disulfide.

Belongs to the glutathione peroxidase family. As to quaternary structure, monomer.

It localises to the peroxisome matrix. The protein localises to the mitochondrion outer membrane. It carries out the reaction 2 glutathione + H2O2 = glutathione disulfide + 2 H2O. The catalysed reaction is a hydroperoxide + [thioredoxin]-dithiol = an alcohol + [thioredoxin]-disulfide + H2O. Functionally, glutathione peroxidase-like protein that protects cells from phospholipid hydroperoxides and nonphospholipid peroxides during oxidative stress. Has peroxidase activity using thioredoxin or glutathione as a reducing power. Involved in peroxisome formation. This is Glutathione peroxidase-like peroxiredoxin 1 from Saccharomyces cerevisiae (strain ATCC 204508 / S288c) (Baker's yeast).